A 140-amino-acid polypeptide reads, in one-letter code: Arsenate reductase ArsI2 (140 aa).

Cysteine 10 (nucleophile; cysteine thioarsenate intermediate) is an active-site residue.

The protein belongs to the ArsC family.

The catalysed reaction is [glutaredoxin]-dithiol + arsenate + glutathione + H(+) = glutathionyl-S-S-[glutaredoxin] + arsenite + H2O. In terms of biological role, catalyzes the reduction of arsenate [As(V)] to arsenite [As(III)]. Does not constitute the major arsenate reductase in cells: essential only in the absence of ArsC (AC P74313). This chain is Arsenate reductase ArsI2, found in Synechocystis sp. (strain ATCC 27184 / PCC 6803 / Kazusa).